The following is a 279-amino-acid chain: 3-methyl-2-oxobutanoate hydroxymethyltransferase (279 aa).

Mg(2+) is bound by residues Asp43 and Asp82. Residues 43–44, Asp82, and Lys112 each bind 3-methyl-2-oxobutanoate; that span reads DS. Glu114 serves as a coordination point for Mg(2+). Glu181 acts as the Proton acceptor in catalysis.

Belongs to the PanB family. Homodecamer; pentamer of dimers. Mg(2+) is required as a cofactor.

The protein resides in the cytoplasm. It carries out the reaction 3-methyl-2-oxobutanoate + (6R)-5,10-methylene-5,6,7,8-tetrahydrofolate + H2O = 2-dehydropantoate + (6S)-5,6,7,8-tetrahydrofolate. It functions in the pathway cofactor biosynthesis; (R)-pantothenate biosynthesis; (R)-pantoate from 3-methyl-2-oxobutanoate: step 1/2. Catalyzes the reversible reaction in which hydroxymethyl group from 5,10-methylenetetrahydrofolate is transferred onto alpha-ketoisovalerate to form ketopantoate. This chain is 3-methyl-2-oxobutanoate hydroxymethyltransferase, found in Geobacillus kaustophilus (strain HTA426).